The following is a 545-amino-acid chain: Chaperonin GroEL 1 (545 aa).

ATP contacts are provided by residues 30 to 33, K51, 87 to 91, G415, and D495; these read TLGP and DGTTT.

Belongs to the chaperonin (HSP60) family. Forms a cylinder of 14 subunits composed of two heptameric rings stacked back-to-back. Interacts with the co-chaperonin GroES.

The protein localises to the cytoplasm. It carries out the reaction ATP + H2O + a folded polypeptide = ADP + phosphate + an unfolded polypeptide.. Functionally, together with its co-chaperonin GroES, plays an essential role in assisting protein folding. The GroEL-GroES system forms a nano-cage that allows encapsulation of the non-native substrate proteins and provides a physical environment optimized to promote and accelerate protein folding. The polypeptide is Chaperonin GroEL 1 (Rhizobium etli (strain ATCC 51251 / DSM 11541 / JCM 21823 / NBRC 15573 / CFN 42)).